The chain runs to 197 residues: Nucleoid occlusion factor SlmA (197 aa).

The HTH tetR-type domain maps to 7 to 67 (INRREHILQC…GLIDFIEESL (61 aa)). The H-T-H motif DNA-binding region spans 30–49 (TTAKLAAEVGVSEAALYRHF).

Belongs to the nucleoid occlusion factor SlmA family. As to quaternary structure, homodimer. Interacts with FtsZ.

The protein localises to the cytoplasm. The protein resides in the nucleoid. Required for nucleoid occlusion (NO) phenomenon, which prevents Z-ring formation and cell division over the nucleoid. Acts as a DNA-associated cell division inhibitor that binds simultaneously chromosomal DNA and FtsZ, and disrupts the assembly of FtsZ polymers. SlmA-DNA-binding sequences (SBS) are dispersed on non-Ter regions of the chromosome, preventing FtsZ polymerization at these regions. The chain is Nucleoid occlusion factor SlmA from Shewanella woodyi (strain ATCC 51908 / MS32).